The following is a 173-amino-acid chain: Shikimate kinase 1 (173 aa).

Residue 14-19 (GAGKST) participates in ATP binding. Residue Ser-18 coordinates Mg(2+). Substrate-binding residues include Asp-36, Arg-60, and Gly-82. Residue Arg-120 coordinates ATP. Arg-140 provides a ligand contact to substrate. Gln-157 lines the ATP pocket.

The protein belongs to the shikimate kinase family. Monomer. Mg(2+) serves as cofactor.

The protein resides in the cytoplasm. The enzyme catalyses shikimate + ATP = 3-phosphoshikimate + ADP + H(+). Its pathway is metabolic intermediate biosynthesis; chorismate biosynthesis; chorismate from D-erythrose 4-phosphate and phosphoenolpyruvate: step 5/7. In terms of biological role, catalyzes the specific phosphorylation of the 3-hydroxyl group of shikimic acid using ATP as a cosubstrate. This is Shikimate kinase 1 from Pectobacterium atrosepticum (strain SCRI 1043 / ATCC BAA-672) (Erwinia carotovora subsp. atroseptica).